A 194-amino-acid polypeptide reads, in one-letter code: Fibroblast growth factor 7 (194 aa).

The first 31 residues, 1-31, serve as a signal peptide directing secretion; sequence MRKWILTRILPTPLYRPCFHLVCLVGTISLA. N-linked (GlcNAc...) asparagine glycans are attached at residues Asn-45 and Asn-149.

The protein belongs to the heparin-binding growth factors family. In terms of assembly, interacts with FGFBP1. Interacts with FGFR2. Affinity between fibroblast growth factors (FGFs) and their receptors is increased by heparan sulfate glycosaminoglycans that function as coreceptors.

Growth factor active on keratinocytes. Possible major paracrine effector of normal epithelial cell proliferation. In Rattus norvegicus (Rat), this protein is Fibroblast growth factor 7 (Fgf7).